The following is a 219-amino-acid chain: 2-C-methyl-D-erythritol 4-phosphate cytidylyltransferase (219 aa).

Belongs to the IspD/TarI cytidylyltransferase family. IspD subfamily.

It catalyses the reaction 2-C-methyl-D-erythritol 4-phosphate + CTP + H(+) = 4-CDP-2-C-methyl-D-erythritol + diphosphate. The protein operates within isoprenoid biosynthesis; isopentenyl diphosphate biosynthesis via DXP pathway; isopentenyl diphosphate from 1-deoxy-D-xylulose 5-phosphate: step 2/6. In terms of biological role, catalyzes the formation of 4-diphosphocytidyl-2-C-methyl-D-erythritol from CTP and 2-C-methyl-D-erythritol 4-phosphate (MEP). In Endomicrobium trichonymphae, this protein is 2-C-methyl-D-erythritol 4-phosphate cytidylyltransferase.